Here is a 121-residue protein sequence, read N- to C-terminus: Protein p14.5 (121 aa).

Ala-2 is subject to N-acetylalanine; by host. Residues 84 to 121 (SLVPDEADNKPEDDEESGGAKPKKKKHLFPKLSSHKSK) form a disordered region. A compositionally biased stretch (basic residues) spans 104 to 121 (KPKKKKHLFPKLSSHKSK).

Belongs to the asfivirus structural protein p14.5 family. As to quaternary structure, interacts with the major capsid protein. Interacts with host IRF3; this interaction interferes with the recruitment of IRF3 to TBK1. Acetylated.

It localises to the virion. Its function is as follows. Structural protein required for transport of intracellular particles from the assembly sites to the plasma membrane. Binds to both ssDNA and dsDNA. Suppressed the activation of the cGAS/STING pathway by interfering with the recruitment of IRF3 to TBK1, which in turn suppresses IRF3 phosphorylation, decreasing interferon production. In African swine fever virus (isolate Pig/Kenya/KEN-50/1950) (ASFV), this protein is Protein p14.5.